Consider the following 231-residue polypeptide: Ribonuclease 3 (231 aa).

An RNase III domain is found at V8 to G135. E48 contacts Mg(2+). Residues D52 and E124 contribute to the active site. E124 lines the Mg(2+) pocket. The 70-residue stretch at D161–A230 folds into the DRBM domain. The tract at residues G210–G231 is disordered. Basic and acidic residues predominate over residues S212–G231.

It belongs to the ribonuclease III family. As to quaternary structure, homodimer. The cofactor is Mg(2+).

It localises to the cytoplasm. It carries out the reaction Endonucleolytic cleavage to 5'-phosphomonoester.. Its function is as follows. Digests double-stranded RNA. Involved in the processing of primary rRNA transcript to yield the immediate precursors to the large and small rRNAs (23S and 16S). Processes some mRNAs, and tRNAs when they are encoded in the rRNA operon. Processes pre-crRNA and tracrRNA of type II CRISPR loci if present in the organism. The chain is Ribonuclease 3 from Caulobacter vibrioides (strain ATCC 19089 / CIP 103742 / CB 15) (Caulobacter crescentus).